The following is a 536-amino-acid chain: Phosphoenolpyruvate carboxykinase (ATP) (536 aa).

3 residues coordinate substrate: arginine 62, tyrosine 203, and lysine 209. ATP contacts are provided by residues lysine 209, histidine 228, and 244–252 (GLSGTGKTT). Mn(2+) is bound by residues lysine 209 and histidine 228. Aspartate 265 provides a ligand contact to Mn(2+). ATP-binding positions include glutamate 293, arginine 329, 445-446 (RI), and threonine 451. Residue arginine 329 participates in substrate binding.

The protein belongs to the phosphoenolpyruvate carboxykinase (ATP) family. Monomer. It depends on Mn(2+) as a cofactor.

It is found in the cytoplasm. The catalysed reaction is oxaloacetate + ATP = phosphoenolpyruvate + ADP + CO2. Its pathway is carbohydrate biosynthesis; gluconeogenesis. In terms of biological role, involved in the gluconeogenesis. Catalyzes the conversion of oxaloacetate (OAA) to phosphoenolpyruvate (PEP) through direct phosphoryl transfer between the nucleoside triphosphate and OAA. The protein is Phosphoenolpyruvate carboxykinase (ATP) of Glaesserella parasuis serovar 5 (strain SH0165) (Haemophilus parasuis).